The chain runs to 142 residues: Small ribosomal subunit protein uS12y (142 aa).

Residue Pro61 is modified to Hydroxyproline.

It belongs to the universal ribosomal protein uS12 family.

This is Small ribosomal subunit protein uS12y (RPS23B) from Arabidopsis thaliana (Mouse-ear cress).